Here is a 232-residue protein sequence, read N- to C-terminus: Histone H1-II (232 aa).

Positions 1–18 (MSDPAPEVAPAAPVASPA) are enriched in low complexity. 2 disordered regions span residues 1 to 44 (MSDP…PPVS) and 103 to 232 (GKGA…AKKA). The region spanning 39-114 (THPPVSEMVV…GASGSFKLPA (76 aa)) is the H15 domain. 2 stretches are compositionally biased toward basic residues: residues 149-171 (SIAKKPKAATATKVKKPVAKSTK) and 179-232 (AAKK…AKKA).

It belongs to the histone H1/H5 family.

It is found in the nucleus. The protein localises to the chromosome. Histones H1 are necessary for the condensation of nucleosome chains into higher-order structures. This Glyptotendipes barbipes (Midge) protein is Histone H1-II.